We begin with the raw amino-acid sequence, 452 residues long: Maltoporin (452 aa).

The first 25 residues, 1–25, serve as a signal peptide directing secretion; the sequence is MMITLRKLPLAVAVAAGVMSAQAMA.

Belongs to the porin LamB (TC 1.B.3) family. In terms of assembly, homotrimer formed of three 18-stranded antiparallel beta-barrels, containing three independent channels.

The protein resides in the cell outer membrane. The enzyme catalyses beta-maltose(in) = beta-maltose(out). Its function is as follows. Involved in the transport of maltose and maltodextrins. The polypeptide is Maltoporin (Salmonella paratyphi A (strain ATCC 9150 / SARB42)).